Consider the following 835-residue polypeptide: Leucine--tRNA ligase (835 aa).

The short motif at Pro44–His54 is the 'HIGH' region element. A 'KMSKS' region motif is present at residues Lys587–Ser591. Lys590 is a binding site for ATP.

The protein belongs to the class-I aminoacyl-tRNA synthetase family.

It localises to the cytoplasm. The enzyme catalyses tRNA(Leu) + L-leucine + ATP = L-leucyl-tRNA(Leu) + AMP + diphosphate. In Lawsonia intracellularis (strain PHE/MN1-00), this protein is Leucine--tRNA ligase.